We begin with the raw amino-acid sequence, 235 residues long: Small ribosomal subunit protein uS2c (235 aa).

It belongs to the universal ribosomal protein uS2 family.

It is found in the plastid. Its subcellular location is the chloroplast. This chain is Small ribosomal subunit protein uS2c (rps2), found in Zygnema circumcarinatum (Green alga).